Consider the following 400-residue polypeptide: Putative cytochrome P450 141 (400 aa).

The next 2 membrane-spanning stretches (helical) occupy residues 225–245 (VVGM…AVIT) and 294–314 (VVIA…ITSA). C346 serves as a coordination point for heme.

The protein belongs to the cytochrome P450 family. Requires heme as cofactor.

It localises to the cell membrane. The polypeptide is Putative cytochrome P450 141 (cyp141) (Mycobacterium tuberculosis (strain CDC 1551 / Oshkosh)).